A 296-amino-acid polypeptide reads, in one-letter code: MLNNMSNNTNNITSVLTESLPYIKKFQGKTIVIKYGGNAMVDEALKSSFARDIVLMKLVGMNPIVVHGGGPQIGKTLKKIGKQSQFIDGMRVTDSETMDVVEMVLGGLVNKEIVNLIHQHGGHSIGLTGKDGSLISAKKLKHDIEPTSEIIDLGHVGEVDKIDISVINLLLKGDFIPVIAPIGVGKDGFSYNINADLVASAIAQALNAEKLILLTNASGLLDANGELLTRLDDNIIDGLIKDGTIHSGMLPKINCALSAVKNGVKSTHIIDGRVAHAVLLEVFTNSGVGTLITCNE.

Substrate-binding positions include 69-70 (GG), arginine 91, and asparagine 192.

Belongs to the acetylglutamate kinase family. ArgB subfamily.

It is found in the cytoplasm. It carries out the reaction N-acetyl-L-glutamate + ATP = N-acetyl-L-glutamyl 5-phosphate + ADP. It participates in amino-acid biosynthesis; L-arginine biosynthesis; N(2)-acetyl-L-ornithine from L-glutamate: step 2/4. In terms of biological role, catalyzes the ATP-dependent phosphorylation of N-acetyl-L-glutamate. This is Acetylglutamate kinase from Ruthia magnifica subsp. Calyptogena magnifica.